We begin with the raw amino-acid sequence, 230 residues long: Sugar fermentation stimulation protein homolog (230 aa).

This sequence belongs to the SfsA family.

The chain is Sugar fermentation stimulation protein homolog from Clostridium botulinum (strain ATCC 19397 / Type A).